Consider the following 79-residue polypeptide: NAD(P)H-quinone oxidoreductase subunit L (79 aa).

The next 2 helical transmembrane spans lie at 10–30 (IIIALIYLSLSVLYLLVIPAV) and 48–68 (GFMYFLMSFFFPGMLLLSPFL).

Belongs to the complex I NdhL subunit family. NDH-1 can be composed of about 15 different subunits; different subcomplexes with different compositions have been identified which probably have different functions.

Its subcellular location is the cellular thylakoid membrane. The catalysed reaction is a plastoquinone + NADH + (n+1) H(+)(in) = a plastoquinol + NAD(+) + n H(+)(out). The enzyme catalyses a plastoquinone + NADPH + (n+1) H(+)(in) = a plastoquinol + NADP(+) + n H(+)(out). NDH-1 shuttles electrons from an unknown electron donor, via FMN and iron-sulfur (Fe-S) centers, to quinones in the respiratory and/or the photosynthetic chain. The immediate electron acceptor for the enzyme in this species is believed to be plastoquinone. Couples the redox reaction to proton translocation, and thus conserves the redox energy in a proton gradient. Cyanobacterial NDH-1 also plays a role in inorganic carbon-concentration. The chain is NAD(P)H-quinone oxidoreductase subunit L from Microcystis aeruginosa (strain NIES-843 / IAM M-2473).